Reading from the N-terminus, the 471-residue chain is MEYLPLFAQLKQRPVLVVGGGEVALRKIALLRRAGACVSVVAKKLHPELAALEQEGALRWLAQSFEPAQLDAVFLVIAATSDAALNRRVFDEANARQRLVNVVDDQPLCSFIFPSIVDRSPLIVAISSSGNAPVLARLLREKIESLLPASLGRMAEVAGGFRDRIKARIPTTDGRRRFWEKAFRGRFASLMAAGDTRAAEAVLEAELDAPQGPQGEIILVGAGPGDAGLLTLRGLQVMQQADVVLYDHLVSDGVLDLVRRDADRICVGKRAGAHAVAQHETNQMLIDFAREGKTVVRLKGGDPFIFGRGGEELEAAKAAGVPFQVVPGVTAASGATAYAGIPLTHRDYAQSAVFVTGHYKPDSEPFDWALLAKSRQTLAIYMGTMKAAEISQQLIAHGRDATTPVAVISRGTREDQRVLTGTLDTLNILAKDAPMPALLVVGEVVQLHQQLAWFQHSTDAENLRSSVVNLA.

Residues 1–203 (MEYLPLFAQL…GDTRAAEAVL (203 aa)) form a precorrin-2 dehydrogenase /sirohydrochlorin ferrochelatase region. Residues 22–23 (EV) and 43–44 (KK) each bind NAD(+). The residue at position 128 (Ser128) is a Phosphoserine. Residues 215–471 (GEIILVGAGP…NLRSSVVNLA (257 aa)) are uroporphyrinogen-III C-methyltransferase. Pro224 contributes to the S-adenosyl-L-methionine binding site. The active-site Proton acceptor is Asp247. Lys269 functions as the Proton donor in the catalytic mechanism. Residues 300-302 (GGD), Ile305, 330-331 (TA), Met382, and Gly411 contribute to the S-adenosyl-L-methionine site.

In the N-terminal section; belongs to the precorrin-2 dehydrogenase / sirohydrochlorin ferrochelatase family. It in the C-terminal section; belongs to the precorrin methyltransferase family.

The catalysed reaction is uroporphyrinogen III + 2 S-adenosyl-L-methionine = precorrin-2 + 2 S-adenosyl-L-homocysteine + H(+). The enzyme catalyses precorrin-2 + NAD(+) = sirohydrochlorin + NADH + 2 H(+). It catalyses the reaction siroheme + 2 H(+) = sirohydrochlorin + Fe(2+). Its pathway is cofactor biosynthesis; adenosylcobalamin biosynthesis; precorrin-2 from uroporphyrinogen III: step 1/1. It participates in cofactor biosynthesis; adenosylcobalamin biosynthesis; sirohydrochlorin from precorrin-2: step 1/1. It functions in the pathway porphyrin-containing compound metabolism; siroheme biosynthesis; precorrin-2 from uroporphyrinogen III: step 1/1. The protein operates within porphyrin-containing compound metabolism; siroheme biosynthesis; siroheme from sirohydrochlorin: step 1/1. Its pathway is porphyrin-containing compound metabolism; siroheme biosynthesis; sirohydrochlorin from precorrin-2: step 1/1. Multifunctional enzyme that catalyzes the SAM-dependent methylations of uroporphyrinogen III at position C-2 and C-7 to form precorrin-2 via precorrin-1. Then it catalyzes the NAD-dependent ring dehydrogenation of precorrin-2 to yield sirohydrochlorin. Finally, it catalyzes the ferrochelation of sirohydrochlorin to yield siroheme. In Cronobacter sakazakii (strain ATCC BAA-894) (Enterobacter sakazakii), this protein is Siroheme synthase 1.